The sequence spans 453 residues: Zinc finger CCCH domain-containing protein 26 (453 aa).

Residues 1 to 15 (MSETQQQVQNSTGSI) show a composition bias toward polar residues. Positions 1-47 (MSETQQQVQNSTGSIRSPDKIEDTFRRMKVNEDNMEQSSPYPDRPGE) are disordered. The residue at position 2 (serine 2) is an N-acetylserine. The segment covering 17–32 (SPDKIEDTFRRMKVNE) has biased composition (basic and acidic residues). C3H1-type zinc fingers lie at residues 44–72 (RPGERDCQFFLRTGQCGYGNSCRYNHPLT), 95–112 (ETGACKYGPTCKYHHPKD), 129–157 (RQGEKPCPYYMQTGLCRFGVACKFHHPHP), 261–289 (FSERAECRFFMNTGTCKYGDDCKYSHPKE), and 307–335 (RPGQPACGNFKAYGFCKFGANCKFDHSML). Polar residues predominate over residues 360–379 (STNLRISSPPSPSDMTTLSN). The tract at residues 360 to 453 (STNLRISSPP…KVQDSSDKST (94 aa)) is disordered. The span at 391–407 (ETEKQDDSPTEPEKSEV) shows a compositional bias: basic and acidic residues. Over residues 413–422 (PNGSDSTSLP) the composition is skewed to polar residues. The segment covering 441–453 (DSSKVQDSSDKST) has biased composition (basic and acidic residues).

The protein resides in the nucleus. The protein is Zinc finger CCCH domain-containing protein 26 (ZFN2) of Arabidopsis thaliana (Mouse-ear cress).